Reading from the N-terminus, the 697-residue chain is Potassium-transporting ATPase ATP-binding subunit (697 aa).

4 helical membrane-spanning segments follow: residues 36-56 (VMFV…RDLI), 66-86 (LQII…EAVA), 218-238 (IALN…TATI), and 253-273 (VLVA…LSAI). The active-site 4-aspartylphosphate intermediate is aspartate 306. Residues aspartate 343, glutamate 347, 376-383 (FTAQTRMS), and lysine 394 each bind ATP. 2 residues coordinate Mg(2+): aspartate 526 and aspartate 530. The next 3 helical transmembrane spans lie at 595–615 (YFAI…QSTG), 631–651 (AILS…PLSL), and 669–689 (LLVY…IIDM).

It belongs to the cation transport ATPase (P-type) (TC 3.A.3) family. Type IA subfamily. In terms of assembly, the system is composed of three essential subunits: KdpA, KdpB and KdpC.

The protein localises to the cell inner membrane. The catalysed reaction is K(+)(out) + ATP + H2O = K(+)(in) + ADP + phosphate + H(+). In terms of biological role, part of the high-affinity ATP-driven potassium transport (or Kdp) system, which catalyzes the hydrolysis of ATP coupled with the electrogenic transport of potassium into the cytoplasm. This subunit is responsible for energy coupling to the transport system and for the release of the potassium ions to the cytoplasm. This Mesorhizobium japonicum (strain LMG 29417 / CECT 9101 / MAFF 303099) (Mesorhizobium loti (strain MAFF 303099)) protein is Potassium-transporting ATPase ATP-binding subunit.